A 401-amino-acid chain; its full sequence is MNSSTKIALVITLLDAMGIGLIMPVLPTLLREFIASEDIANHFGVLLALYALMQVIFAPWLGKMSDRFGRRPVLLLSLIGASLDYLLLAFSSALWMLYLGRLLSGITGATGAVAASVIADTTSASQRVKWFGWLGASFGLGLIAGPIIGGFAGEISPHSPFFIAALLNIVTFLVVMFWFRETKNTRDNTDTEVGVETQSNSVYITLFKTMPILLIIYFSAQLIGQIPATVWVLFTENRFGWNSMMVGFSLAGLGLLHSVFQAFVAGRIATKWGEKTAVLLGFIADSSAFAFLAFISEGWLVFPVLILLAGGGIALPALQGVMSIQTKSHQQGALQGLLVSLTNATGVIGPLLFAVIYNHSLPIWDGWIWIIGLAFYCIIILLSMTFMLTPQAQGSKQETSA.

The Cytoplasmic portion of the chain corresponds to 1 to 6 (MNSSTK). A helical transmembrane segment spans residues 7-30 (IALVITLLDAMGIGLIMPVLPTLL). The Periplasmic portion of the chain corresponds to 31–42 (REFIASEDIANH). A helical membrane pass occupies residues 43–61 (FGVLLALYALMQVIFAPWL). The Cytoplasmic segment spans residues 62-71 (GKMSDRFGRR). A helical membrane pass occupies residues 72 to 91 (PVLLLSLIGASLDYLLLAFS). The Periplasmic segment spans residues 92–98 (SALWMLY). A helical transmembrane segment spans residues 99-119 (LGRLLSGITGATGAVAASVIA). At 120 to 129 (DTTSASQRVK) the chain is on the cytoplasmic side. Residues 130–152 (WFGWLGASFGLGLIAGPIIGGFA) form a helical membrane-spanning segment. Over 153-158 (GEISPH) the chain is Periplasmic. The helical transmembrane segment at 159–178 (SPFFIAALLNIVTFLVVMFW) threads the bilayer. Residues 179–211 (FRETKNTRDNTDTEVGVETQSNSVYITLFKTMP) lie on the Cytoplasmic side of the membrane. The helical transmembrane segment at 212-232 (ILLIIYFSAQLIGQIPATVWV) threads the bilayer. Topologically, residues 233-243 (LFTENRFGWNS) are periplasmic. Residues 244 to 265 (MMVGFSLAGLGLLHSVFQAFVA) traverse the membrane as a helical segment. The Cytoplasmic segment spans residues 266–275 (GRIATKWGEK). The helical transmembrane segment at 276–295 (TAVLLGFIADSSAFAFLAFI) threads the bilayer. Over 296–298 (SEG) the chain is Periplasmic. Residues 299–322 (WLVFPVLILLAGGGIALPALQGVM) form a helical membrane-spanning segment. Residues 323–332 (SIQTKSHQQG) are Cytoplasmic-facing. Residues 333-356 (ALQGLLVSLTNATGVIGPLLFAVI) traverse the membrane as a helical segment. Residues 357-365 (YNHSLPIWD) are Periplasmic-facing. A helical transmembrane segment spans residues 366-387 (GWIWIIGLAFYCIIILLSMTFM). At 388–401 (LTPQAQGSKQETSA) the chain is on the cytoplasmic side.

It belongs to the major facilitator superfamily. TCR/Tet family.

The protein resides in the cell inner membrane. In terms of biological role, resistance to tetracycline by an active tetracycline efflux. This is an energy-dependent process that decreases the accumulation of the antibiotic in whole cells. This protein functions as a metal-tetracycline/H(+) antiporter. The protein is Tetracycline resistance protein, class B (tetA) of Escherichia coli.